A 677-amino-acid chain; its full sequence is Methionine--tRNA ligase (677 aa).

A 'HIGH' region motif is present at residues 15-25 (PYANGSIHLGH). Zn(2+) is bound by residues Cys-146, Cys-149, Cys-159, and Cys-162. The 'KMSKS' region signature appears at 333 to 337 (KMSKS). Lys-336 provides a ligand contact to ATP. The region spanning 575 to 677 (DFAKVDLRVA…AGAKPGHQVK (103 aa)) is the tRNA-binding domain.

This sequence belongs to the class-I aminoacyl-tRNA synthetase family. MetG type 1 subfamily. As to quaternary structure, homodimer. It depends on Zn(2+) as a cofactor.

It localises to the cytoplasm. It catalyses the reaction tRNA(Met) + L-methionine + ATP = L-methionyl-tRNA(Met) + AMP + diphosphate. Its function is as follows. Is required not only for elongation of protein synthesis but also for the initiation of all mRNA translation through initiator tRNA(fMet) aminoacylation. The sequence is that of Methionine--tRNA ligase from Shigella flexneri serotype 5b (strain 8401).